A 257-amino-acid chain; its full sequence is 3-deoxy-manno-octulosonate cytidylyltransferase (257 aa).

The protein belongs to the KdsB family.

The protein resides in the cytoplasm. It catalyses the reaction 3-deoxy-alpha-D-manno-oct-2-ulosonate + CTP = CMP-3-deoxy-beta-D-manno-octulosonate + diphosphate. The protein operates within nucleotide-sugar biosynthesis; CMP-3-deoxy-D-manno-octulosonate biosynthesis; CMP-3-deoxy-D-manno-octulosonate from 3-deoxy-D-manno-octulosonate and CTP: step 1/1. It participates in bacterial outer membrane biogenesis; lipopolysaccharide biosynthesis. In terms of biological role, activates KDO (a required 8-carbon sugar) for incorporation into bacterial lipopolysaccharide in Gram-negative bacteria. This Methylobacillus flagellatus (strain ATCC 51484 / DSM 6875 / VKM B-1610 / KT) protein is 3-deoxy-manno-octulosonate cytidylyltransferase.